Reading from the N-terminus, the 337-residue chain is Biotin synthase 1 (337 aa).

The disordered stretch occupies residues 1–23 (MSSVLTQPLAFHPPRPAVQPREH). In terms of domain architecture, Radical SAM core spans 57-284 (TRVEFATLLS…TARVRLSAGR (228 aa)). Residues Cys-72, Cys-76, and Cys-79 each contribute to the [4Fe-4S] cluster site. 4 residues coordinate [2Fe-2S] cluster: Cys-116, Cys-147, Cys-207, and Arg-279.

Belongs to the radical SAM superfamily. Biotin synthase family. In terms of assembly, homodimer. [4Fe-4S] cluster is required as a cofactor. The cofactor is [2Fe-2S] cluster.

It catalyses the reaction (4R,5S)-dethiobiotin + (sulfur carrier)-SH + 2 reduced [2Fe-2S]-[ferredoxin] + 2 S-adenosyl-L-methionine = (sulfur carrier)-H + biotin + 2 5'-deoxyadenosine + 2 L-methionine + 2 oxidized [2Fe-2S]-[ferredoxin]. The protein operates within cofactor biosynthesis; biotin biosynthesis; biotin from 7,8-diaminononanoate: step 2/2. Functionally, catalyzes the conversion of dethiobiotin (DTB) to biotin by the insertion of a sulfur atom into dethiobiotin via a radical-based mechanism. The sequence is that of Biotin synthase 1 from Polaromonas sp. (strain JS666 / ATCC BAA-500).